We begin with the raw amino-acid sequence, 206 residues long: Small ribosomal subunit protein uS4 (206 aa).

The interval 28–52 is disordered; it reads YLDRRPYAPGQHGQRRGRGRPSDYS. In terms of domain architecture, S4 RNA-binding spans 96-171; sequence RRLDNVVFRM…QKRRRVSPWI (76 aa).

Belongs to the universal ribosomal protein uS4 family. In terms of assembly, part of the 30S ribosomal subunit. Contacts protein S5. The interaction surface between S4 and S5 is involved in control of translational fidelity.

Its function is as follows. One of the primary rRNA binding proteins, it binds directly to 16S rRNA where it nucleates assembly of the body of the 30S subunit. In terms of biological role, with S5 and S12 plays an important role in translational accuracy. The sequence is that of Small ribosomal subunit protein uS4 from Deinococcus geothermalis (strain DSM 11300 / CIP 105573 / AG-3a).